We begin with the raw amino-acid sequence, 485 residues long: MSSSPTAQPSQDQLATKAQAWSALFSEPMSDLVKRYTSSVFFDKRLWQADIAGSLAHADMLAAQGIISADDHAAIRRGMATITQEIESGAFEWKLDLEDVHLNIEARLTQLVGDAGKRLHTGRSRNDQVATDVRLWLRGEIDMIADLLKELQRSLVDVAEQNVEVILPGFTHLQVAQPVSFAHHMLAYVEMFARDAERMQDVRRRTNVLPLGSAALAGTTYPLDRERVARTLGMEGVCQNSLDAVSDRDFAIEFTAAASLCMVHVSRLSEELIIWMSQNFGFIRIADRFTTGSSIMPQKKNPDVPELARGKTGRVVGHLMGLITLMKGQPLAYNKDNQEDKEPLFDTVDTLKDTLRIFAEMVGGQRDPATGRKEGGITVNPQAMEQAAQKGYATATDLADYLVKKGLPFRDAHETVAHAVKAATSHGVDLSELPLTVLQGFHPAIGKDVFDALSLRGSLNARNTLGGTAPAQVRTQLARHRARLG.

It belongs to the lyase 1 family. Argininosuccinate lyase subfamily.

It is found in the cytoplasm. The enzyme catalyses 2-(N(omega)-L-arginino)succinate = fumarate + L-arginine. Its pathway is amino-acid biosynthesis; L-arginine biosynthesis; L-arginine from L-ornithine and carbamoyl phosphate: step 3/3. The protein is Argininosuccinate lyase of Paracidovorax citrulli (strain AAC00-1) (Acidovorax citrulli).